We begin with the raw amino-acid sequence, 159 residues long: Small ribosomal subunit protein uS13 (159 aa).

The disordered stretch occupies residues 136–159 (QRTRSTGRSGATVGVTRKKTQAKK). Over residues 138 to 149 (TRSTGRSGATVG) the composition is skewed to low complexity.

Belongs to the universal ribosomal protein uS13 family. Part of the 30S ribosomal subunit. Forms a loose heterodimer with protein S19. Forms two bridges to the 50S subunit in the 70S ribosome.

Located at the top of the head of the 30S subunit, it contacts several helices of the 16S rRNA. In the 70S ribosome it contacts the 23S rRNA (bridge B1a) and protein L5 of the 50S subunit (bridge B1b), connecting the 2 subunits; these bridges are implicated in subunit movement. The sequence is that of Small ribosomal subunit protein uS13 from Methanothrix thermoacetophila (strain DSM 6194 / JCM 14653 / NBRC 101360 / PT) (Methanosaeta thermophila).